The primary structure comprises 332 residues: Biotin synthase (332 aa).

The region spanning 53-283 (WGKGGIHACS…VHPHSIIKFA (231 aa)) is the Radical SAM core domain. [4Fe-4S] cluster-binding residues include cysteine 71, cysteine 75, and cysteine 78. Cysteine 150, cysteine 211, and lysine 281 together coordinate [2Fe-2S] cluster.

It belongs to the radical SAM superfamily. Biotin synthase family. In terms of assembly, homodimer. [4Fe-4S] cluster serves as cofactor. Requires [2Fe-2S] cluster as cofactor.

It catalyses the reaction (4R,5S)-dethiobiotin + (sulfur carrier)-SH + 2 reduced [2Fe-2S]-[ferredoxin] + 2 S-adenosyl-L-methionine = (sulfur carrier)-H + biotin + 2 5'-deoxyadenosine + 2 L-methionine + 2 oxidized [2Fe-2S]-[ferredoxin]. It participates in cofactor biosynthesis; biotin biosynthesis; biotin from 7,8-diaminononanoate: step 2/2. Catalyzes the conversion of dethiobiotin (DTB) to biotin by the insertion of a sulfur atom into dethiobiotin via a radical-based mechanism. The protein is Biotin synthase of Chlorobium phaeovibrioides (strain DSM 265 / 1930) (Prosthecochloris vibrioformis (strain DSM 265)).